The sequence spans 1337 residues: uncharacterized protein (1337 aa).

2 disordered regions span residues 1–94 (MPTS…QSSA) and 119–174 (ARDI…PSFF). Low complexity-rich tracts occupy residues 18–37 (SNTS…ASGS) and 68–79 (SSTHFQSSHSVS). Residues 80–94 (NAHNQSPLNQSQSSA) are compositionally biased toward polar residues. Over residues 123–147 (PQQPSHSQNPSSSSSSSSSQSSQHS) the composition is skewed to low complexity. Residues 157-167 (NEKKSLDDPSP) are compositionally biased toward basic and acidic residues. The next 6 membrane-spanning stretches (helical) occupy residues 209–229 (GLKP…LVLA), 241–261 (FFVV…PMLW), 267–287 (FLLL…ATVA), 328–348 (VRPL…ALFI), 361–381 (CVFS…YPYF), and 387–407 (LFFI…TLFI). Disordered stretches follow at residues 623 to 662 (SHVR…SHKS) and 868 to 894 (YDEN…DADH). Residues 626–644 (RTGSNNSEAPLAAKTSTTK) are compositionally biased toward polar residues. Positions 868–880 (YDENIHNDVDKDM) are enriched in basic and acidic residues. Helical transmembrane passes span 917 to 937 (MNVF…PAFC), 975 to 995 (IFGT…GSGH), 997 to 1017 (LGNA…IQFI), 1021 to 1041 (FVIL…LTVT), 1066 to 1086 (FLTV…PQPR), and 1275 to 1295 (FAVG…IMFI).

The protein resides in the membrane. This is an uncharacterized protein from Schizosaccharomyces pombe (strain 972 / ATCC 24843) (Fission yeast).